The following is a 167-amino-acid chain: ATP synthase subunit b (167 aa).

The helical transmembrane segment at 9 to 29 threads the bilayer; sequence ALPLGNMLFIIIAFLLLMLIL.

Belongs to the ATPase B chain family. F-type ATPases have 2 components, F(1) - the catalytic core - and F(0) - the membrane proton channel. F(1) has five subunits: alpha(3), beta(3), gamma(1), delta(1), epsilon(1). F(0) has three main subunits: a(1), b(2) and c(10-14). The alpha and beta chains form an alternating ring which encloses part of the gamma chain. F(1) is attached to F(0) by a central stalk formed by the gamma and epsilon chains, while a peripheral stalk is formed by the delta and b chains.

Its subcellular location is the cell membrane. Its function is as follows. F(1)F(0) ATP synthase produces ATP from ADP in the presence of a proton or sodium gradient. F-type ATPases consist of two structural domains, F(1) containing the extramembraneous catalytic core and F(0) containing the membrane proton channel, linked together by a central stalk and a peripheral stalk. During catalysis, ATP synthesis in the catalytic domain of F(1) is coupled via a rotary mechanism of the central stalk subunits to proton translocation. Component of the F(0) channel, it forms part of the peripheral stalk, linking F(1) to F(0). This is ATP synthase subunit b from Leuconostoc mesenteroides subsp. mesenteroides (strain ATCC 8293 / DSM 20343 / BCRC 11652 / CCM 1803 / JCM 6124 / NCDO 523 / NBRC 100496 / NCIMB 8023 / NCTC 12954 / NRRL B-1118 / 37Y).